Here is a 658-residue protein sequence, read N- to C-terminus: UvrABC system protein B (658 aa).

The 154-residue stretch at 25–178 (KSLKNKNHYQ…KSFLLKLVEM (154 aa)) folds into the Helicase ATP-binding domain. 38–45 (GVTGSGKT) provides a ligand contact to ATP. Residues 91 to 114 (HFDYYQPESYIPRRDLFIEKDSSI) carry the Beta-hairpin motif. The Helicase C-terminal domain maps to 433–607 (QVQDLFDEIK…ELKLRDDETK (175 aa)). Residues 623-658 (EKIIKELDKKMRECAKNLDFEEAMHLRDEIAKLRTL) form the UVR domain.

It belongs to the UvrB family. Forms a heterotetramer with UvrA during the search for lesions. Interacts with UvrC in an incision complex.

It is found in the cytoplasm. Functionally, the UvrABC repair system catalyzes the recognition and processing of DNA lesions. A damage recognition complex composed of 2 UvrA and 2 UvrB subunits scans DNA for abnormalities. Upon binding of the UvrA(2)B(2) complex to a putative damaged site, the DNA wraps around one UvrB monomer. DNA wrap is dependent on ATP binding by UvrB and probably causes local melting of the DNA helix, facilitating insertion of UvrB beta-hairpin between the DNA strands. Then UvrB probes one DNA strand for the presence of a lesion. If a lesion is found the UvrA subunits dissociate and the UvrB-DNA preincision complex is formed. This complex is subsequently bound by UvrC and the second UvrB is released. If no lesion is found, the DNA wraps around the other UvrB subunit that will check the other stand for damage. The sequence is that of UvrABC system protein B from Helicobacter acinonychis (strain Sheeba).